A 312-amino-acid polypeptide reads, in one-letter code: Undecaprenyl-diphosphatase (312 aa).

The next 7 membrane-spanning stretches (helical) occupy residues 74–94 (GVAF…WYFW), 122–142 (VSIG…KVFI), 154–174 (VAIA…ERIG), 183–203 (LDIR…IPGV), 226–246 (FSFL…LKTL), 254–274 (VGLV…YIAI), and 288–308 (IFIW…ISGV).

The protein belongs to the UppP family.

The protein localises to the cell inner membrane. It catalyses the reaction di-trans,octa-cis-undecaprenyl diphosphate + H2O = di-trans,octa-cis-undecaprenyl phosphate + phosphate + H(+). Its function is as follows. Catalyzes the dephosphorylation of undecaprenyl diphosphate (UPP). Confers resistance to bacitracin. In Trichodesmium erythraeum (strain IMS101), this protein is Undecaprenyl-diphosphatase.